A 390-amino-acid polypeptide reads, in one-letter code: Neuromedin-B receptor (390 aa).

Residues 1–19 (MPSKSLSNLSVTTGANESG) are compositionally biased toward polar residues. Residues 1 to 22 (MPSKSLSNLSVTTGANESGSVP) form a disordered region. Over 1–41 (MPSKSLSNLSVTTGANESGSVPEGWERDFLPASDGTTTELV) the chain is Extracellular. N-linked (GlcNAc...) asparagine glycosylation is found at Asn8 and Asn16. Residues 42–65 (IRCVIPSLYLLIITVGLLGNIMLV) form a helical membrane-spanning segment. Residues 66–79 (KIFITNSAMRSVPN) lie on the Cytoplasmic side of the membrane. A helical transmembrane segment spans residues 80-99 (IFISNLAAGDLLLLLTCVPV). At 100–117 (DASRYFFDEWMFGKVGCK) the chain is on the extracellular side. Cys116 and Cys198 are oxidised to a cystine. Residues 118-139 (LIPVIQLTSVGVSVFTLTALSA) traverse the membrane as a helical segment. Topologically, residues 140 to 156 (DRYRAIVNPMDMQTSGA) are cytoplasmic. The chain crosses the membrane as a helical span at residues 157–177 (LLRTCVKAMGIWVVSVLLAVP). The Extracellular portion of the chain corresponds to 178-211 (EAVFSEVARISSLDNSSFTACIPYPQTDELHPKI). An N-linked (GlcNAc...) asparagine glycan is attached at Asn192. The helical transmembrane segment at 212 to 235 (HSVLIFLVYFLIPLAIISIYYYHI) threads the bilayer. Residues 236 to 266 (AKTLIKSAHNLPGEYNEHTKKQMETRKRLAK) lie on the Cytoplasmic side of the membrane. Residues 267–287 (IVLVFVGCFIFCWFPNHILYM) form a helical membrane-spanning segment. The Extracellular portion of the chain corresponds to 288 to 299 (YRSFNYNEIDPS). The helical transmembrane segment at 300 to 327 (LGHMIVTLVARVLSFGNSCVNPFALYLL) threads the bilayer. The Cytoplasmic segment spans residues 328 to 390 (SESFRRHFNS…GHSMKQEMAL (63 aa)). Cys341 carries S-palmitoyl cysteine lipidation. Ser352 is subject to Phosphoserine.

Belongs to the G-protein coupled receptor 1 family. In terms of tissue distribution, expressed in epididymis (at protein level).

The protein localises to the cell membrane. Receptor for neuromedin-B. Contributes to the maintenance of basal sigh rate through signaling in the pre-Botzinger complex, a cluster of several thousand neurons in the ventrolateral medulla responsible for inspiration during respiratory activity. Contributes to the induction of sneezing following exposure to chemical irritants or allergens which causes release of NMB by nasal sensory neurons and activation of NMBR-expressing neurons in the sneeze-evoking region of the brainstem. These in turn activate neurons of the caudal ventral respiratory group, giving rise to the sneezing response. Contributes to induction of acute itch, possibly through its activation on dorsal root ganglion neurons by the NMB peptide. Plays a role in the innate immune response to influenza A virus infection by enhancing interferon alpha expression and reducing expression of IL6. Plays a role in CSF1-induced proliferation of osteoclast precursors by contributing to the positive regulation of the expression of the CSF1 receptor CSF1R. The chain is Neuromedin-B receptor (NMBR) from Homo sapiens (Human).